We begin with the raw amino-acid sequence, 846 residues long: Homeobox protein 12 (846 aa).

Low complexity-rich tracts occupy residues 78–94 (IIGS…VQAT), 160–170 (PLSSSSTVVPA), 237–249 (GNHN…YNYN), 289–301 (QPQS…QLQP), 309–321 (LQPQ…QSQQ), 331–352 (NNNN…NNNN), 394–443 (NYNQ…SNSN), and 458–482 (NNNN…QQIY). Disordered regions lie at residues 78 to 103 (IIGS…PSSS), 151 to 177 (IVQP…PPSV), 230 to 249 (NGNG…YNYN), 286 to 374 (GTKQ…SSSP), 394 to 482 (NYNQ…QQIY), and 515 to 571 (FKQN…NNQF). The segment covering 524 to 546 (NNDDDDDDDDDEEEEEEEEDDND) has biased composition (acidic residues). Residues 553–604 (SYDEENNNNNNNNNNNNQFKNESIIIGDNYYEIINDRIKSIKQKLHFLEKNS) are a coiled coil. Over residues 559 to 569 (NNNNNNNNNNN) the composition is skewed to low complexity. The homeobox DNA-binding region spans 773–835 (DKKNRRTLND…NKRSREKNQR (63 aa)).

Its subcellular location is the nucleus. Putative transcription factor. The sequence is that of Homeobox protein 12 (hbx12) from Dictyostelium discoideum (Social amoeba).